Here is a 425-residue protein sequence, read N- to C-terminus: COP9 signalosome complex subunit 1 (425 aa).

A PCI domain is found at 219-379; the sequence is ASSGVPPEIY…KSKALQTLEN (161 aa).

The protein belongs to the CSN1 family. Component of the COP9 signalosome (CSN) complex.

Its subcellular location is the cytoplasm. The protein localises to the nucleus. Functionally, component of the COP9 signalosome (CSN) complex that acts as an regulator of the ubiquitin (Ubl) conjugation pathway by mediating the deneddylation of the cullin subunit of SCF-type E3 ubiquitin-protein ligase complexes. The CSN complex is involved in the regulation of the circadian clock through its control of the stability of the SCF(FWD-1) complex. This chain is COP9 signalosome complex subunit 1 (csn-1), found in Neurospora crassa (strain ATCC 24698 / 74-OR23-1A / CBS 708.71 / DSM 1257 / FGSC 987).